The chain runs to 456 residues: tRNA modification GTPase MnmE (456 aa).

Arginine 24, glutamate 81, and lysine 120 together coordinate (6S)-5-formyl-5,6,7,8-tetrahydrofolate. The TrmE-type G domain maps to 216-379; the sequence is GMTVVIAGRP…LRDHLKACMG (164 aa). Residue asparagine 226 coordinates K(+). Residues 226–231, 245–251, 270–273, and 335–338 each bind GTP; these read NAGKSS, TAIAGTT, DTAG, and NKAD. Serine 230 is a binding site for Mg(2+). K(+) is bound by residues threonine 245, isoleucine 247, and threonine 250. A Mg(2+)-binding site is contributed by threonine 251. Lysine 456 lines the (6S)-5-formyl-5,6,7,8-tetrahydrofolate pocket.

It belongs to the TRAFAC class TrmE-Era-EngA-EngB-Septin-like GTPase superfamily. TrmE GTPase family. As to quaternary structure, homodimer. Heterotetramer of two MnmE and two MnmG subunits. K(+) serves as cofactor.

Its subcellular location is the cytoplasm. In terms of biological role, exhibits a very high intrinsic GTPase hydrolysis rate. Involved in the addition of a carboxymethylaminomethyl (cmnm) group at the wobble position (U34) of certain tRNAs, forming tRNA-cmnm(5)s(2)U34. The polypeptide is tRNA modification GTPase MnmE (Pseudomonas putida (strain W619)).